The primary structure comprises 509 residues: Cytochrome P450 monooxygenase ARMGADRAFT_974139 (509 aa).

The helical transmembrane segment at 4–24 threads the bilayer; it reads ASLAVVVWAILLVLWLRRIFG. Residues Asn-96 and Asn-279 are each glycosylated (N-linked (GlcNAc...) asparagine). Position 439 (Cys-439) interacts with heme.

It belongs to the cytochrome P450 family. Requires heme as cofactor.

The protein resides in the membrane. Its pathway is secondary metabolite biosynthesis. Cytochrome P450 monooxygenase, part of the gene cluster that mediates the biosynthesis of melleolides, a range of antifungal and phytotoxic polyketide derivatives composed of an orsellinic acid (OA) moiety esterified to various sesquiterpene alcohols. The first step in melleolides biosynthesis is performed by the delta(6)-protoilludene synthase PRO1 which catalyzes the cyclization of farnesyl diphosphate to protoilludene. The orsellinic acid synthase armB produces OA by condensing acetyl-CoA with 3 malonyl-CoA units in a three-round chain elongation reaction folowed by a C2-C7 ring closure. ArmB further catalyzes the trans-esterification of OA to the various sesquiterpene alcohols resulting from the hydroxylation of protoilludene. The melleolides cluster also includes 5 cytochrome P450 monooxygenases, 4 NAD(+)-dependent oxidoreductases, one flavin-dependent oxidoreductase, and one O-methyltransferase. The cytochrome P450 monooxygenases may be involved in protoilludene hydroxylation to elaborate melleolides with multiple alcohol groups, such as melleolide D, which carries alcohol functionalities at C-4, C-5, C-10, and C-13. The role of the NAD(+)-dependent enzymes remains unknown. Numerous melleolides, including arnamial, show 5'-O-methylation of the aromatic moiety which may be catalyzed by the methyltransferase encoded in the cluster. The flavin-dependent oxidoreductase might represent the dehydrogenase yielding the aldehyde in position 1 of arnamial and other melleolides. Finally, several halogenase localized outside of the cluster, are able to catalyze the transfer of a single chlorine atom to the melleolide backbone, resulting in a 6'-chloromelleolide product. The sequence is that of Cytochrome P450 monooxygenase ARMGADRAFT_974139 from Armillaria gallica (Bulbous honey fungus).